The primary structure comprises 538 residues: BTB/POZ domain-containing protein 6 (538 aa).

The N-terminal stretch at 1–17 (MLLPLACLHGRVAQCLT) is a signal peptide. 2 disordered regions span residues 29–53 (PRRG…PPAK) and 76–115 (AAVG…SPGW). Over residues 35–53 (ARGAASTGAEAAPAAPPAK) the composition is skewed to low complexity. Positions 85–103 (RSPPSAPAPAPPPPAPAPP) are enriched in pro residues. Residues 136–206 (ADVHFVVGPP…MYSDEIDLEA (71 aa)) form the BTB domain.

In terms of tissue distribution, expressed in lens.

The protein resides in the cytoplasm. Functionally, adapter protein for the cul3 E3 ubiquitin-protein ligase complex. Involved in late neuronal development and muscle formation. The chain is BTB/POZ domain-containing protein 6 from Homo sapiens (Human).